A 206-amino-acid chain; its full sequence is Outer-membrane lipoprotein LolB (206 aa).

The N-terminal stretch at methionine 1–alanine 21 is a signal peptide. Cysteine 22 carries the N-palmitoyl cysteine lipid modification. The S-diacylglycerol cysteine moiety is linked to residue cysteine 22.

The protein belongs to the LolB family. In terms of assembly, monomer.

It is found in the cell outer membrane. Functionally, plays a critical role in the incorporation of lipoproteins in the outer membrane after they are released by the LolA protein. The sequence is that of Outer-membrane lipoprotein LolB from Sodalis glossinidius (strain morsitans).